The sequence spans 130 residues: Cyclin-dependent kinase 4 inhibitor B (130 aa).

4 ANK repeats span residues 5-34 (SSDAGLATAAARGQVETVRQLLEAGADPNA), 38-66 (FGRRPIQVMMMGSAQVAELLLLHGAEPNC), 71-100 (TLTRPVHDAAREGFLDTLVVLHRAGARLDV), and 104-130 (WGRLPVDLAEEQGHRDIARYLHAATGD). Thr-12 is subject to Phosphothreonine.

This sequence belongs to the CDKN2 cyclin-dependent kinase inhibitor family. Heterodimer of CDKN2B with CDK4 or CDK6. In terms of tissue distribution, expressed ubiquitously.

Functionally, interacts strongly with CDK4 and CDK6. Potent inhibitor. Potential effector of TGF-beta induced cell cycle arrest. The protein is Cyclin-dependent kinase 4 inhibitor B (Cdkn2b) of Mus musculus (Mouse).